The sequence spans 540 residues: Phosphoenolpyruvate carboxykinase (ATP) (540 aa).

Positions 67, 207, and 213 each coordinate substrate. ATP is bound by residues Lys-213, His-232, and 248 to 256 (GLSGTGKTT). Mn(2+) is bound by residues Lys-213 and His-232. Asp-269 is a Mn(2+) binding site. Residues Glu-297, Arg-333, 449-450 (RI), and Thr-455 contribute to the ATP site. Position 333 (Arg-333) interacts with substrate.

It belongs to the phosphoenolpyruvate carboxykinase (ATP) family. In terms of assembly, monomer. It depends on Mn(2+) as a cofactor.

Its subcellular location is the cytoplasm. The enzyme catalyses oxaloacetate + ATP = phosphoenolpyruvate + ADP + CO2. Its pathway is carbohydrate biosynthesis; gluconeogenesis. Its function is as follows. Involved in the gluconeogenesis. Catalyzes the conversion of oxaloacetate (OAA) to phosphoenolpyruvate (PEP) through direct phosphoryl transfer between the nucleoside triphosphate and OAA. This Aliivibrio fischeri (strain MJ11) (Vibrio fischeri) protein is Phosphoenolpyruvate carboxykinase (ATP).